A 274-amino-acid polypeptide reads, in one-letter code: Large ribosomal subunit protein uL2 (274 aa).

2 disordered regions span residues 28–54 (KPFA…TRHI) and 221–274 (RGTA…RSKK). Positions 39 to 49 (KTGGRNNNGRI) are enriched in polar residues.

The protein belongs to the universal ribosomal protein uL2 family. In terms of assembly, part of the 50S ribosomal subunit. Forms a bridge to the 30S subunit in the 70S ribosome.

In terms of biological role, one of the primary rRNA binding proteins. Required for association of the 30S and 50S subunits to form the 70S ribosome, for tRNA binding and peptide bond formation. It has been suggested to have peptidyltransferase activity; this is somewhat controversial. Makes several contacts with the 16S rRNA in the 70S ribosome. The polypeptide is Large ribosomal subunit protein uL2 (Edwardsiella ictaluri (strain 93-146)).